A 414-amino-acid polypeptide reads, in one-letter code: Glutamyl-tRNA reductase (414 aa).

Residues 49 to 52 (TCNR), Ser108, 113 to 115 (EPQ), and Gln119 each bind substrate. Cys50 functions as the Nucleophile in the catalytic mechanism. Residue 188–193 (GAGQTG) coordinates NADP(+).

This sequence belongs to the glutamyl-tRNA reductase family. Homodimer.

The enzyme catalyses (S)-4-amino-5-oxopentanoate + tRNA(Glu) + NADP(+) = L-glutamyl-tRNA(Glu) + NADPH + H(+). Its pathway is porphyrin-containing compound metabolism; protoporphyrin-IX biosynthesis; 5-aminolevulinate from L-glutamyl-tRNA(Glu): step 1/2. In terms of biological role, catalyzes the NADPH-dependent reduction of glutamyl-tRNA(Glu) to glutamate 1-semialdehyde (GSA). This is Glutamyl-tRNA reductase from Francisella tularensis subsp. holarctica (strain LVS).